A 243-amino-acid polypeptide reads, in one-letter code: Ribonuclease 3 (243 aa).

Positions 10 to 146 constitute an RNase III domain; it reads VNRFRKRFDT…FIGALYLDQG (137 aa). Residue Glu59 participates in Mg(2+) binding. Asp63 is a catalytic residue. The Mg(2+) site is built by Asp132 and Glu135. Glu135 is an active-site residue. The 70-residue stretch at 172–241 folds into the DRBM domain; it reads DFKTQFQEYV…AESAYKQLKQ (70 aa). Over residues 219-231 the composition is skewed to basic and acidic residues; it reads GKGKTKKESEQRA. Positions 219-243 are disordered; it reads GKGKTKKESEQRAAESAYKQLKQIK.

The protein belongs to the ribonuclease III family. As to quaternary structure, homodimer. Requires Mg(2+) as cofactor.

It localises to the cytoplasm. The catalysed reaction is Endonucleolytic cleavage to 5'-phosphomonoester.. In terms of biological role, digests double-stranded RNA. Involved in the processing of primary rRNA transcript to yield the immediate precursors to the large and small rRNAs (23S and 16S). Processes some mRNAs, and tRNAs when they are encoded in the rRNA operon. Processes pre-crRNA and tracrRNA of type II CRISPR loci if present in the organism. The chain is Ribonuclease 3 from Staphylococcus aureus (strain USA300).